Reading from the N-terminus, the 454-residue chain is Chromosomal replication initiator protein DnaA (454 aa).

The interval M1 to E80 is domain I, interacts with DnaA modulators. The tract at residues E80–S117 is domain II. Residues H118–Q335 form a domain III, AAA+ region region. Residues G163, G165, K166, and T167 each contribute to the ATP site. Residues D336 to A454 form a domain IV, binds dsDNA region.

This sequence belongs to the DnaA family. In terms of assembly, oligomerizes as a right-handed, spiral filament on DNA at oriC.

The protein localises to the cytoplasm. Its function is as follows. Plays an essential role in the initiation and regulation of chromosomal replication. ATP-DnaA binds to the origin of replication (oriC) to initiate formation of the DNA replication initiation complex once per cell cycle. Binds the DnaA box (a 9 base pair repeat at the origin) and separates the double-stranded (ds)DNA. Forms a right-handed helical filament on oriC DNA; dsDNA binds to the exterior of the filament while single-stranded (ss)DNA is stabiized in the filament's interior. The ATP-DnaA-oriC complex binds and stabilizes one strand of the AT-rich DNA unwinding element (DUE), permitting loading of DNA polymerase. After initiation quickly degrades to an ADP-DnaA complex that is not apt for DNA replication. Binds acidic phospholipids. This is Chromosomal replication initiator protein DnaA from Haemophilus influenzae (strain ATCC 51907 / DSM 11121 / KW20 / Rd).